The following is a 421-amino-acid chain: NADH-quinone oxidoreductase subunit F 2 (421 aa).

53–62 (GRGGAGFPTG) is an NAD(+) binding site. 165–212 (GAGAYICGEETAMLESLEGKRAQPRLKPPFPAVAGLYASPTVINNVET) contacts FMN. The [4Fe-4S] cluster site is built by Cys342, Cys345, Cys348, and Cys388.

The protein belongs to the complex I 51 kDa subunit family. Requires FMN as cofactor. It depends on [4Fe-4S] cluster as a cofactor.

The catalysed reaction is a quinone + NADH + 5 H(+)(in) = a quinol + NAD(+) + 4 H(+)(out). Its function is as follows. NDH-1 shuttles electrons from NADH, via FMN and iron-sulfur (Fe-S) centers, to quinones in the respiratory chain. The immediate electron acceptor for the enzyme in this species is believed to be ubiquinone. Couples the redox reaction to proton translocation (for every two electrons transferred, four hydrogen ions are translocated across the cytoplasmic membrane), and thus conserves the redox energy in a proton gradient. This chain is NADH-quinone oxidoreductase subunit F 2 (nuoF2), found in Rhizobium meliloti (strain 1021) (Ensifer meliloti).